A 214-amino-acid polypeptide reads, in one-letter code: Thymidylate kinase (214 aa).

Position 10-17 (10-17) interacts with ATP; that stretch reads GPDGAGKT.

The protein belongs to the thymidylate kinase family.

The catalysed reaction is dTMP + ATP = dTDP + ADP. Phosphorylation of dTMP to form dTDP in both de novo and salvage pathways of dTTP synthesis. In Levilactobacillus brevis (strain ATCC 367 / BCRC 12310 / CIP 105137 / JCM 1170 / LMG 11437 / NCIMB 947 / NCTC 947) (Lactobacillus brevis), this protein is Thymidylate kinase.